The sequence spans 370 residues: Chloromuconate cycloisomerase (370 aa).

The active-site Proton acceptor is Lys165. 3 residues coordinate Mn(2+): Asp194, Glu220, and Asp245. The Proton donor role is filled by Glu323.

It belongs to the mandelate racemase/muconate lactonizing enzyme family. Mn(2+) serves as cofactor.

The catalysed reaction is 2-[(2R)-2-chloro-2,5-dihydro-5-oxofuryl]acetate = 3-chloro-cis,cis-muconate + H(+). It functions in the pathway aromatic compound metabolism; 3-chlorocatechol degradation. Its function is as follows. Highly active toward chlorinated substrates but retains diminished activity toward the non-chlorinated substrates. The polypeptide is Chloromuconate cycloisomerase (clcB) (Pseudomonas putida (Arthrobacter siderocapsulatus)).